A 136-amino-acid polypeptide reads, in one-letter code: Glutamate mutase sigma subunit (136 aa).

Positions 3 to 136 (KKKIVIGVIG…IIDLKKDFKI (134 aa)) constitute a B12-binding domain. Adenosylcob(III)alamin is bound by residues 13 to 17 (SDCHT), histidine 16, and 61 to 63 (SSI).

This sequence belongs to the methylaspartate mutase GlmS subunit family. In terms of assembly, heterotetramer composed of 2 epsilon subunits (GlmE) and 2 sigma subunits (GlmS). GlmE exists as a homodimer and GlmS as a monomer. The cofactor is adenosylcob(III)alamin.

It carries out the reaction (2S,3S)-3-methyl-L-aspartate = L-glutamate. Its pathway is amino-acid degradation; L-glutamate degradation via mesaconate pathway; acetate and pyruvate from L-glutamate: step 1/4. In terms of biological role, catalyzes the carbon skeleton rearrangement of L-glutamate to L-threo-3-methylaspartate ((2S,3S)-3-methylaspartate). This Fusobacterium nucleatum subsp. nucleatum (strain ATCC 25586 / DSM 15643 / BCRC 10681 / CIP 101130 / JCM 8532 / KCTC 2640 / LMG 13131 / VPI 4355) protein is Glutamate mutase sigma subunit.